Here is a 185-residue protein sequence, read N- to C-terminus: Ribosome-recycling factor (185 aa).

This sequence belongs to the RRF family.

It localises to the cytoplasm. Its function is as follows. Responsible for the release of ribosomes from messenger RNA at the termination of protein biosynthesis. May increase the efficiency of translation by recycling ribosomes from one round of translation to another. The sequence is that of Ribosome-recycling factor from Clostridium novyi (strain NT).